We begin with the raw amino-acid sequence, 133 residues long: Fluoride-specific ion channel FluC 4 (133 aa).

3 consecutive transmembrane segments (helical) span residues 7–27, 37–57, and 60–80; these read ILVL…SGYV, WGTF…AGLG, and LGGI…LLGG. Gly-79 and Thr-82 together coordinate Na(+). Residues 107 to 127 traverse the membrane as a helical segment; it reads IVASALLCVLAVAAGYGGIMW.

It belongs to the fluoride channel Fluc/FEX (TC 1.A.43) family.

The protein localises to the cell inner membrane. It catalyses the reaction fluoride(in) = fluoride(out). Its activity is regulated as follows. Na(+) is not transported, but it plays an essential structural role and its presence is essential for fluoride channel function. Functionally, fluoride-specific ion channel. Important for reducing fluoride concentration in the cell, thus reducing its toxicity. This chain is Fluoride-specific ion channel FluC 4, found in Brucella abortus biovar 1 (strain 9-941).